A 305-amino-acid polypeptide reads, in one-letter code: Putative S-adenosyl-L-methionine-dependent methyltransferase Mvan_1344 (305 aa).

S-adenosyl-L-methionine is bound by residues Asp-130 and 159-160 (DL).

Belongs to the UPF0677 family.

Functionally, exhibits S-adenosyl-L-methionine-dependent methyltransferase activity. This Mycolicibacterium vanbaalenii (strain DSM 7251 / JCM 13017 / BCRC 16820 / KCTC 9966 / NRRL B-24157 / PYR-1) (Mycobacterium vanbaalenii) protein is Putative S-adenosyl-L-methionine-dependent methyltransferase Mvan_1344.